The primary structure comprises 115 residues: Large ribosomal subunit protein bL20 (115 aa).

The protein belongs to the bacterial ribosomal protein bL20 family.

In terms of biological role, binds directly to 23S ribosomal RNA and is necessary for the in vitro assembly process of the 50S ribosomal subunit. It is not involved in the protein synthesizing functions of that subunit. The sequence is that of Large ribosomal subunit protein bL20 from Borrelia hermsii (strain HS1 / DAH).